A 116-amino-acid polypeptide reads, in one-letter code: Flagellar transcriptional regulator FlhD (116 aa).

The protein belongs to the FlhD family. As to quaternary structure, homodimer; disulfide-linked. Forms a heterohexamer composed of two FlhC and four FlhD subunits. Each FlhC binds a FlhD dimer, forming a heterotrimer, and a hexamer assembles by dimerization of two heterotrimers.

It is found in the cytoplasm. Functions in complex with FlhC as a master transcriptional regulator that regulates transcription of several flagellar and non-flagellar operons by binding to their promoter region. Activates expression of class 2 flagellar genes, including fliA, which is a flagellum-specific sigma factor that turns on the class 3 genes. Also regulates genes whose products function in a variety of physiological pathways. In Serratia proteamaculans (strain 568), this protein is Flagellar transcriptional regulator FlhD.